The sequence spans 292 residues: 4-hydroxy-tetrahydrodipicolinate synthase 2 (292 aa).

Residue T46 coordinates pyruvate. The Proton donor/acceptor role is filled by Y134. The active-site Schiff-base intermediate with substrate is K162. V204 contributes to the pyruvate binding site.

The protein belongs to the DapA family. Homotetramer; dimer of dimers.

It is found in the cytoplasm. The catalysed reaction is L-aspartate 4-semialdehyde + pyruvate = (2S,4S)-4-hydroxy-2,3,4,5-tetrahydrodipicolinate + H2O + H(+). The protein operates within amino-acid biosynthesis; L-lysine biosynthesis via DAP pathway; (S)-tetrahydrodipicolinate from L-aspartate: step 3/4. In terms of biological role, catalyzes the condensation of (S)-aspartate-beta-semialdehyde [(S)-ASA] and pyruvate to 4-hydroxy-tetrahydrodipicolinate (HTPA). The chain is 4-hydroxy-tetrahydrodipicolinate synthase 2 from Halalkalibacterium halodurans (strain ATCC BAA-125 / DSM 18197 / FERM 7344 / JCM 9153 / C-125) (Bacillus halodurans).